Reading from the N-terminus, the 431-residue chain is Transmembrane protease serine 11C (431 aa).

The Cytoplasmic segment spans residues 1–33; the sequence is MARGQPRRSEEQWTALQNRTECKTKIKLTRCGK. A helical; Signal-anchor for type II membrane protein membrane pass occupies residues 34-54; the sequence is ITLGILTAVLAAVLIGLIAYF. Topologically, residues 55 to 431 are extracellular; sequence AACGKDSFYY…RDWITSKTGL (377 aa). Residues 60–177 form the SEA domain; sequence DSFYYHVSFK…SSFKFSDIAM (118 aa). N-linked (GlcNAc...) asparagine glycosylation occurs at asparagine 99. Residues 200–430 enclose the Peptidase S1 domain; that stretch reads VAGGQDAEEG…YRDWITSKTG (231 aa). A disulfide bond links cysteine 225 and cysteine 241. Histidine 240 acts as the Charge relay system in catalysis. Residue asparagine 276 is glycosylated (N-linked (GlcNAc...) asparagine). The active-site Charge relay system is aspartate 285. N-linked (GlcNAc...) asparagine glycosylation occurs at asparagine 347. Cystine bridges form between cysteine 350-cysteine 366 and cysteine 377-cysteine 406. Catalysis depends on serine 381, which acts as the Charge relay system.

Belongs to the peptidase S1 family. Proteolytically cleaved via an autocatalytic mechanism. Expressed specifically in Purkinje neurons of the cerebellum (at protein level). Also detected in spinal cord.

The protein resides in the cell membrane. It localises to the cell projection. The protein localises to the dendrite. Its subcellular location is the perikaryon. In terms of biological role, serine protease which has a preference for Arg or Lys in position P1 and uncharged residues in positions P2 and P3. Shows specificity towards FGF2 in vitro. This chain is Transmembrane protease serine 11C, found in Mus musculus (Mouse).